The primary structure comprises 403 residues: Phosphopentomutase (403 aa).

Mn(2+) contacts are provided by D13, D298, H303, D339, H340, and H351.

It belongs to the phosphopentomutase family. Mn(2+) is required as a cofactor.

The protein localises to the cytoplasm. The catalysed reaction is 2-deoxy-alpha-D-ribose 1-phosphate = 2-deoxy-D-ribose 5-phosphate. It catalyses the reaction alpha-D-ribose 1-phosphate = D-ribose 5-phosphate. The protein operates within carbohydrate degradation; 2-deoxy-D-ribose 1-phosphate degradation; D-glyceraldehyde 3-phosphate and acetaldehyde from 2-deoxy-alpha-D-ribose 1-phosphate: step 1/2. Isomerase that catalyzes the conversion of deoxy-ribose 1-phosphate (dRib-1-P) and ribose 1-phosphate (Rib-1-P) to deoxy-ribose 5-phosphate (dRib-5-P) and ribose 5-phosphate (Rib-5-P), respectively. The chain is Phosphopentomutase from Streptococcus uberis (strain ATCC BAA-854 / 0140J).